A 649-amino-acid polypeptide reads, in one-letter code: Leucine-rich repeat transmembrane protein FLRT3 (649 aa).

Positions 1-28 (MISPAWSIFLIGTKIGLFLQVAPLSVMA) are cleaved as a signal peptide. One can recognise an LRRNT domain in the interval 29–58 (KSCPSVCRCDAGFIYCNDRFLTSIPTGIPE). The Extracellular segment spans residues 29 to 528 (KSCPSVCRCD…KEPYKNPNLP (500 aa)). Disulfide bonds link Cys31–Cys37 and Cys35–Cys44. Residues 38–67 (DAGFIYCNDRFLTSIPTGIPEDATTLYLQN) are interaction with ADGRL3. 10 LRR repeats span residues 59–80 (DATT…SDLK), 84–104 (KVER…NLPK), 105–126 (YVKE…SLSK), 129–150 (YLEE…EGAF), 155–176 (YLRL…LPRT), 177–197 (IEEL…SLQG), 200–220 (SLKR…GDKV), 226–247 (NLTE…LPGT), 248–269 (NLRK…AFSY), and 272–293 (QLYR…IFDD). Residue Asn226 is glycosylated (N-linked (GlcNAc...) asparagine). Asn282 and Asn296 each carry an N-linked (GlcNAc...) asparagine glycan. The region spanning 305–357 (NPWYCGCKMKWVRDWLQSLPVKVNVRGLMCQAPEKVRGMAIKDLNAELFDCKD) is the LRRCT domain. A disulfide bridge links Cys309 with Cys334. The disordered stretch occupies residues 385-407 (VTKQPDIKNPKLTKDHQTTGSPS). Positions 389–401 (PDIKNPKLTKDHQ) are enriched in basic and acidic residues. The region spanning 409–504 (KTITITVKSV…VCIETETAPL (96 aa)) is the Fibronectin type-III domain. The helical transmembrane segment at 529 to 549 (LAAIIGGAVALVTIALLALVC) threads the bilayer. The Cytoplasmic portion of the chain corresponds to 550–649 (WYVHRNGSLF…GIPDSDHSHS (100 aa)). The interval 622–649 (LYKNNHSESSSNRSYRDSGIPDSDHSHS) is disordered.

Monomer and homodimer. Self-associates (via leucine-rich repeats), giving rise to homooligomers. Interacts with FGFR1. Interacts (via extracellular domain) with ADGRL1/LPHN1 and LPHN2 (via olfactomedin-like domain). Interacts (via extracellular domain) with ADGRL3 (via olfactomedin-like domain); the interaction is direct. Interacts (via extracellular domain) with UNC5B and UNC5D (via extracellular domain); the interaction is direct. Identified in complexes composed of FLRT3, ADGRL3 and UNC5B, respectively FLRT3, ADGRL3 and UNC5D. May also interact (via extracellular domain) with UNC5A and UNC5C. Interacts (via cytoplasmic domain) with ROBO1. N-glycosylated. Post-translationally, proteolytic cleavage in the juxtamembrane region gives rise to a soluble ectodomain. Cleavage is probably effected by a metalloprotease.

Its subcellular location is the cell membrane. It is found in the presynaptic cell membrane. It localises to the endoplasmic reticulum membrane. The protein localises to the cell junction. The protein resides in the focal adhesion. Its subcellular location is the secreted. It is found in the cell projection. It localises to the axon. The protein localises to the growth cone membrane. Functionally, functions in cell-cell adhesion, cell migration and axon guidance, exerting an attractive or repulsive role depending on its interaction partners. Plays a role in the spatial organization of brain neurons. Plays a role in vascular development in the retina. Plays a role in cell-cell adhesion via its interaction with ADGRL3 and probably also other latrophilins that are expressed at the surface of adjacent cells. Interaction with the intracellular domain of ROBO1 mediates axon attraction towards cells expressing NTN1. Mediates axon growth cone collapse and plays a repulsive role in neuron guidance via its interaction with UNC5B, and possibly also other UNC-5 family members. Promotes neurite outgrowth (in vitro). Mediates cell-cell contacts that promote an increase both in neurite number and in neurite length. Plays a role in the regulation of the density of glutamaergic synapses. Plays a role in fibroblast growth factor-mediated signaling cascades. Required for normal morphogenesis during embryonic development, but not for normal embryonic patterning. Required for normal ventral closure, headfold fusion and definitive endoderm migration during embryonic development. Required for the formation of a normal basement membrane and the maintenance of a normal anterior visceral endoderm during embryonic development. This is Leucine-rich repeat transmembrane protein FLRT3 (FLRT3) from Pongo abelii (Sumatran orangutan).